The sequence spans 204 residues: N-alpha-acetyltransferase 40 (204 aa).

An N-acetyltransferase domain is found at 39–202 (EIYHHLEKGL…YYILYTKSRK (164 aa)). Substrate-binding positions include Tyr64, 107–109 (TVE), and Tyr118. Acetyl-CoA-binding positions include 120 to 122 (IQL) and 128 to 133 (GRNVGK). Thr154 provides a ligand contact to substrate. Asn159 contacts acetyl-CoA. Ser176 is a substrate binding site.

This sequence belongs to the acetyltransferase family. NAA40 subfamily.

It localises to the cytoplasm. The protein resides in the nucleus. The catalysed reaction is N-terminal L-seryl-[histone H4] + acetyl-CoA = N-terminal N(alpha)-acetyl-L-seryl-[histone H4] + CoA + H(+). It catalyses the reaction N-terminal L-seryl-[histone H2A] + acetyl-CoA = N-terminal N(alpha)-acetyl-L-seryl-[histone H2A] + CoA + H(+). In terms of biological role, N-alpha-acetyltransferase that specifically mediates the acetylation of the N-terminal residues of histones H4 and H2A. This chain is N-alpha-acetyltransferase 40, found in Schizosaccharomyces pombe (strain 972 / ATCC 24843) (Fission yeast).